Here is a 76-residue protein sequence, read N- to C-terminus: UPF0248 protein MmarC7_1289 (76 aa).

It belongs to the UPF0248 family.

The polypeptide is UPF0248 protein MmarC7_1289 (Methanococcus maripaludis (strain C7 / ATCC BAA-1331)).